Here is a 451-residue protein sequence, read N- to C-terminus: Ribosomal protein uS12 methylthiotransferase RimO (451 aa).

In terms of domain architecture, MTTase N-terminal spans 17–127 (PTIGFVSLGC…VLAQVHEHLP (111 aa)). 6 residues coordinate [4Fe-4S] cluster: cysteine 26, cysteine 62, cysteine 91, cysteine 160, cysteine 164, and cysteine 167. The Radical SAM core domain maps to 146-383 (LTPRHYAYLK…MQLQQRISTE (238 aa)). The TRAM domain maps to 386–451 (KQKVGQTLPV…DEYDLWGTRV (66 aa)).

It belongs to the methylthiotransferase family. RimO subfamily. Requires [4Fe-4S] cluster as cofactor.

It localises to the cytoplasm. It catalyses the reaction L-aspartate(89)-[ribosomal protein uS12]-hydrogen + (sulfur carrier)-SH + AH2 + 2 S-adenosyl-L-methionine = 3-methylsulfanyl-L-aspartate(89)-[ribosomal protein uS12]-hydrogen + (sulfur carrier)-H + 5'-deoxyadenosine + L-methionine + A + S-adenosyl-L-homocysteine + 2 H(+). In terms of biological role, catalyzes the methylthiolation of an aspartic acid residue of ribosomal protein uS12. The polypeptide is Ribosomal protein uS12 methylthiotransferase RimO (Cellvibrio japonicus (strain Ueda107) (Pseudomonas fluorescens subsp. cellulosa)).